The chain runs to 353 residues: tRNA-specific 2-thiouridylase MnmA 1 (353 aa).

ATP-binding positions include 9–16 (AMSGGVDS) and Met-35. Catalysis depends on Cys-98, which acts as the Nucleophile. An intrachain disulfide couples Cys-98 to Cys-194. ATP is bound at residue Gly-122. Positions 144-146 (KDQ) are interaction with tRNA. Catalysis depends on Cys-194, which acts as the Cysteine persulfide intermediate. The segment at 300–301 (RY) is interaction with tRNA.

It belongs to the MnmA/TRMU family.

The protein localises to the cytoplasm. The catalysed reaction is S-sulfanyl-L-cysteinyl-[protein] + uridine(34) in tRNA + AH2 + ATP = 2-thiouridine(34) in tRNA + L-cysteinyl-[protein] + A + AMP + diphosphate + H(+). In terms of biological role, catalyzes the 2-thiolation of uridine at the wobble position (U34) of tRNA, leading to the formation of s(2)U34. This Clostridium botulinum (strain Okra / Type B1) protein is tRNA-specific 2-thiouridylase MnmA 1.